The primary structure comprises 141 residues: Hemoglobin subunit alpha-A/Q/R/T (141 aa).

The Globin domain maps to 1 to 141 (VLSPADKTNV…VSTVLTSKYR (141 aa)). At S3 the chain carries Phosphoserine. An N6-succinyllysine modification is found at K7. Phosphothreonine is present on T8. An N6-succinyllysine modification is found at K11. Residue K16 is modified to N6-acetyllysine; alternate. At K16 the chain carries N6-succinyllysine; alternate. Residue Y24 is modified to Phosphotyrosine. Position 35 is a phosphoserine (S35). Position 40 is an N6-succinyllysine (K40). S49 bears the Phosphoserine mark. H58 contributes to the O2 binding site. H87 provides a ligand contact to heme b. S102 carries the phosphoserine modification. T108 carries the phosphothreonine modification. 2 positions are modified to phosphoserine: S124 and S131. Phosphothreonine is present on residues T134 and T137. S138 carries the post-translational modification Phosphoserine.

The protein belongs to the globin family. In terms of assembly, heterotetramer of two alpha chains and two beta chains. In terms of tissue distribution, red blood cells.

In terms of biological role, involved in oxygen transport from the lung to the various peripheral tissues. This chain is Hemoglobin subunit alpha-A/Q/R/T, found in Macaca fascicularis (Crab-eating macaque).